Here is a 220-residue protein sequence, read N- to C-terminus: Translation initiation factor 6 (220 aa).

This sequence belongs to the eIF-6 family.

Binds to the 50S ribosomal subunit and prevents its association with the 30S ribosomal subunit to form the 70S initiation complex. The sequence is that of Translation initiation factor 6 from Halobacterium salinarum (strain ATCC 29341 / DSM 671 / R1).